A 183-amino-acid polypeptide reads, in one-letter code: Peptide deformylase-like (183 aa).

Glutamate 140 is an active-site residue.

Belongs to the polypeptide deformylase family.

The protein is Peptide deformylase-like of Rickettsia conorii (strain ATCC VR-613 / Malish 7).